The primary structure comprises 141 residues: HTH-type transcriptional repressor NsrR (141 aa).

In terms of domain architecture, HTH rrf2-type spans 2 to 129 (QLTSFTDYGL…DQYTLADMVK (128 aa)). Positions 28 to 51 (ISEVTEVYGVSRNHMVKIINQLSR) form a DNA-binding region, H-T-H motif. [2Fe-2S] cluster-binding residues include C91, C96, and C102.

[2Fe-2S] cluster is required as a cofactor.

Nitric oxide-sensitive repressor of genes involved in protecting the cell against nitrosative stress. May require iron for activity. This is HTH-type transcriptional repressor NsrR from Pectobacterium atrosepticum (strain SCRI 1043 / ATCC BAA-672) (Erwinia carotovora subsp. atroseptica).